The primary structure comprises 403 residues: Aspartic endopeptidase PEP1 (403 aa).

Residues 1–20 form the signal peptide; that stretch reads MVQISQIGAVLAVCSTLTVA. Residues 21-67 constitute a propeptide, activation peptide; it reads APTKGKARFNVPQVAVPMKAVHHPAVAYARALHKFGMKVPKAVSDAA. The Peptidase A1 domain occupies 82 to 400; that stretch reads YVTQVTVGQG…DTEGPRIGFA (319 aa). The active site involves aspartate 98. N-linked (GlcNAc...) asparagine glycosylation is found at asparagine 159 and asparagine 270. Aspartate 293 is a catalytic residue. Cysteine 329 and cysteine 361 are joined by a disulfide.

Belongs to the peptidase A1 family.

Its subcellular location is the secreted. It catalyses the reaction Hydrolysis of proteins with broad specificity. Generally favors hydrophobic residues in P1 and P1', but also accepts Lys in P1, which leads to activation of trypsinogen. Does not clot milk.. Its function is as follows. Secreted aspartic endopeptidase that allows assimilation of proteinaceous substrates. Can catalyze hydrolysis of the major structural proteins of basement membrane, elastin, collagen, and laminin. Thought to play a significant role in virulence. In terms of biological role, can catalyze hydrolysis of the major structural proteins of basement membrane, elastin, collagen, and laminin. Thought to play a significant role in virulence. This is Aspartic endopeptidase PEP1 (PEP1) from Trichophyton verrucosum (strain HKI 0517).